Here is a 691-residue protein sequence, read N- to C-terminus: Elongation factor G (691 aa).

In terms of domain architecture, tr-type G spans 8–282 (ERVRNIGIAA…AVVDYLPAPV (275 aa)). Residues 17-24 (AHIDAGKT), 81-85 (DTPGH), and 135-138 (NKMD) contribute to the GTP site.

The protein belongs to the TRAFAC class translation factor GTPase superfamily. Classic translation factor GTPase family. EF-G/EF-2 subfamily.

The protein resides in the cytoplasm. Its function is as follows. Catalyzes the GTP-dependent ribosomal translocation step during translation elongation. During this step, the ribosome changes from the pre-translocational (PRE) to the post-translocational (POST) state as the newly formed A-site-bound peptidyl-tRNA and P-site-bound deacylated tRNA move to the P and E sites, respectively. Catalyzes the coordinated movement of the two tRNA molecules, the mRNA and conformational changes in the ribosome. The protein is Elongation factor G of Prochlorococcus marinus (strain MIT 9211).